Reading from the N-terminus, the 401-residue chain is Riboflavin biosynthesis protein RibBA (401 aa).

Residues 1 to 203 (MTDFQFSKVE…IQQLQEYRRK (203 aa)) are DHBP synthase. D-ribulose 5-phosphate is bound by residues 30 to 31 (RE), aspartate 35, 142 to 146 (RNGHT), and glutamate 166. Glutamate 31 contacts Mg(2+). Residue histidine 145 coordinates Mg(2+). The interval 204–401 (HDSLVKQISV…QIKMGHMFNF (198 aa)) is GTP cyclohydrolase II. 254–258 (RIHSE) provides a ligand contact to GTP. Zn(2+) contacts are provided by cysteine 259, cysteine 270, and cysteine 272. Residues glutamine 275, 297-299 (EGR), and threonine 319 each bind GTP. The active-site Proton acceptor; for GTP cyclohydrolase activity is aspartate 331. Catalysis depends on arginine 333, which acts as the Nucleophile; for GTP cyclohydrolase activity. Residues threonine 354 and lysine 359 each coordinate GTP.

The protein in the N-terminal section; belongs to the DHBP synthase family. It in the C-terminal section; belongs to the GTP cyclohydrolase II family. Requires Mg(2+) as cofactor. Mn(2+) serves as cofactor. Zn(2+) is required as a cofactor.

It carries out the reaction D-ribulose 5-phosphate = (2S)-2-hydroxy-3-oxobutyl phosphate + formate + H(+). The enzyme catalyses GTP + 4 H2O = 2,5-diamino-6-hydroxy-4-(5-phosphoribosylamino)-pyrimidine + formate + 2 phosphate + 3 H(+). It participates in cofactor biosynthesis; riboflavin biosynthesis; 2-hydroxy-3-oxobutyl phosphate from D-ribulose 5-phosphate: step 1/1. The protein operates within cofactor biosynthesis; riboflavin biosynthesis; 5-amino-6-(D-ribitylamino)uracil from GTP: step 1/4. Its function is as follows. Catalyzes the conversion of D-ribulose 5-phosphate to formate and 3,4-dihydroxy-2-butanone 4-phosphate. Catalyzes the conversion of GTP to 2,5-diamino-6-ribosylamino-4(3H)-pyrimidinone 5'-phosphate (DARP), formate and pyrophosphate. The protein is Riboflavin biosynthesis protein RibBA of Actinobacillus pleuropneumoniae serotype 3 (strain JL03).